Consider the following 153-residue polypeptide: Interleukin-17A (153 aa).

The first 23 residues, 1 to 23 (MASMRTSSMSLLLLLSLVALVKA), serve as a signal peptide directing secretion. An N-linked (GlcNAc...) asparagine glycan is attached at Asn53. The disordered stretch occupies residues 56–76 (TNSRRPTDYHKRSTSPWTLHR). 2 disulfides stabilise this stretch: Cys92/Cys142 and Cys97/Cys144.

Belongs to the IL-17 family. In terms of assembly, homodimer. Forms complexes with IL17RA and IL17RC receptors with 2:1 binding stoichiometry: two receptor chains for one interleukin molecule. IL17A homodimer preferentially drives the formation of IL17RA-IL17RC heterodimeric receptor complex. IL17A homodimer adopts an asymmetrical ternary structure with one IL17RA molecule, allowing for high affinity interactions of one IL17A monomer with one IL17RA molecule (via D1 and D2 domains), while disfavoring binding of a second IL17RA molecule on the other IL17A monomer. Heterodimer with IL17F. IL17A-IL17F forms complexes with IL17RA-IL17RC, but with lower affinity when compared to IL17A homodimer. IL17RA and IL17RC chains cannot distinguish between IL17A and IL17F molecules, potentially enabling the formation of topologically distinct complexes.

It localises to the secreted. Its function is as follows. Effector cytokine of innate and adaptive immune system involved in antimicrobial host defense and maintenance of tissue integrity. Signals via IL17RA-IL17RC heterodimeric receptor complex, triggering homotypic interaction of IL17RA and IL17RC chains with TRAF3IP2 adapter. This leads to downstream TRAF6-mediated activation of NF-kappa-B and MAPkinase pathways ultimately resulting in transcriptional activation of cytokines, chemokines, antimicrobial peptides and matrix metalloproteinases, with potential strong immune inflammation. Plays an important role in connecting T cell-mediated adaptive immunity and acute inflammatory response to destroy extracellular bacteria and fungi. As a signature effector cytokine of T-helper 17 cells (Th17), primarily induces neutrophil activation and recruitment at infection and inflammatory sites. In airway epithelium, mediates neutrophil chemotaxis via induction of CXCL1 and CXCL5 chemokines. In secondary lymphoid organs, contributes to germinal center formation by regulating the chemotactic response of B cells to CXCL12 and CXCL13, enhancing retention of B cells within the germinal centers, B cell somatic hypermutation rate and selection toward plasma cells. Effector cytokine of a subset of gamma-delta T cells that functions as part of an inflammatory circuit downstream IL1B, TLR2 and IL23A-IL12B to promote neutrophil recruitment for efficient bacterial clearance. Effector cytokine of innate immune cells including invariant natural killer cell (iNKT) and group 3 innate lymphoid cells that mediate initial neutrophilic inflammation. Involved in the maintenance of the integrity of epithelial barriers during homeostasis and pathogen infection. Upon acute injury, has a direct role in epithelial barrier formation by regulating OCLN localization and tight junction biogenesis. As part of the mucosal immune response induced by commensal bacteria, enhances host's ability to resist pathogenic bacterial and fungal infections by promoting neutrophil recruitment and antimicrobial peptides release. In synergy with IL17F, mediates the production of antimicrobial beta-defensins DEFB1, DEFB103A, and DEFB104A by mucosal epithelial cells, limiting the entry of microbes through the epithelial barriers. Involved in antiviral host defense through various mechanisms. Enhances immunity against West Nile virus by promoting T cell cytotoxicity. May play a beneficial role in influenza A virus (H5N1) infection by enhancing B cell recruitment and immune response in the lung. Contributes to influenza A virus (H1N1) clearance by driving the differentiation of B-1a B cells, providing for production of virus-specific IgM antibodies at first line of host defense. The polypeptide is Interleukin-17A (IL17A) (Bos taurus (Bovine)).